Consider the following 616-residue polypeptide: Chaperone protein HscA (616 aa).

The protein belongs to the heat shock protein 70 family.

Its function is as follows. Chaperone involved in the maturation of iron-sulfur cluster-containing proteins. Has a low intrinsic ATPase activity which is markedly stimulated by HscB. Involved in the maturation of IscU. This is Chaperone protein HscA from Escherichia fergusonii (strain ATCC 35469 / DSM 13698 / CCUG 18766 / IAM 14443 / JCM 21226 / LMG 7866 / NBRC 102419 / NCTC 12128 / CDC 0568-73).